Here is a 240-residue protein sequence, read N- to C-terminus: Uridylate kinase (240 aa).

12–15 is a binding site for ATP; it reads KLSG. Residues 20 to 25 are involved in allosteric activation by GTP; the sequence is GDKGFG. Residue G54 participates in UMP binding. Residues G55 and R59 each contribute to the ATP site. UMP contacts are provided by residues D74 and 135–142; that span reads TGSPYFST. 3 residues coordinate ATP: N163, Y169, and D172.

Belongs to the UMP kinase family. In terms of assembly, homohexamer.

It is found in the cytoplasm. The enzyme catalyses UMP + ATP = UDP + ADP. The protein operates within pyrimidine metabolism; CTP biosynthesis via de novo pathway; UDP from UMP (UMPK route): step 1/1. Allosterically activated by GTP. Inhibited by UTP. Its function is as follows. Catalyzes the reversible phosphorylation of UMP to UDP. In Limosilactobacillus reuteri (strain DSM 20016) (Lactobacillus reuteri), this protein is Uridylate kinase.